The sequence spans 1193 residues: Dynamin-like protein A (1193 aa).

A D1, associates with and fuses membranes, tethers lipsomes region spans residues Met-1–Glu-609. The interval Gly-50–Ser-57 is G1 motif D1. Residues Thr-76–Ala-78 form a G2 motif D1 region. The G3 motif D1 stretch occupies residues Asp-141 to Gly-144. Residues Asn-199 to Asp-202 form a G4 motif D1 region. The interval Met-561–Met-1193 is D2, does not associate with membranes. Residues Gly-619–Ser-626 are G1 motif D2. The tract at residues Thr-645–Ala-647 is G2 motif D2. The interval Asp-774–Gly-777 is G3 motif D2. The segment at Asn-837 to Asp-840 is G4 motif D2.

This sequence belongs to the TRAFAC class dynamin-like GTPase superfamily. Dynamin/Fzo/YdjA family. As to quaternary structure, homodimer in solution. Both D1 and D2 domains interact with YwpG, YneK interacts only with D1 while RNase Y (rny) only interacts with whole protein. Probably oligomerizes at damaged membrane sites. It depends on Mg(2+) as a cofactor.

The protein resides in the cell membrane. It catalyses the reaction GTP + H2O = GDP + phosphate + H(+). Its function is as follows. Mediates lipid mixing of vesicles and full mixing of their contents in the absence and presence of GTP. Tethers and mixes small vesicles better than larger ones, indicating a curvature preference. GTP slows down DynA-mediated lipid fusion, perhaps controlling its activity. Prefers phospholipid composition close to the B.subtilis membrane; requires phosphatidylglycerol for fusion has no activity on pure phosphatidylethanolamine vesicles. Regulates membrane lipid diffusion. Required to prevent membrane damage when exposed to low levels of membrane-damaging antibiotics or to bacteriophage. Probably surveys the cell membrane for stress; localizes to sites of membrane damage (treatment with nisin) and forms foci in cells treated with pore-forming compounds (CCCP). May assist membrane repair, possibly by membrane tethering and fusion. Probably functions both in early and late cell division, affects the proper formation of the FtsZ ring. Plays a non-redundant role with flottilin (floT) in membrane dynamics and cell shape. Probably able to bend membranes. Tethers liposomes and mediates their fusion; this does not require GTPase activity or the presence of GTP. Both GTPase domains (dynamin-type G) are required for GTPase activity. Functionally, has intrinsic affinity for membranes and membrane distortion capability; causes tubulation and membrane distortion when expressed in a Drosophila cell line. In Bacillus subtilis (strain 168), this protein is Dynamin-like protein A.